Reading from the N-terminus, the 916-residue chain is DNA repair endonuclease XPF (916 aa).

Residues 1–457 (MESGQPARRI…EVWMKFRKED (457 aa)) form a helicase-like region. 2 leucine-zipper regions span residues 233 to 254 (LNAC…DLSL) and 270 to 298 (LDPL…LQYL). Lys-289 is modified (N6-acetyllysine). The tract at residues 460 to 487 (KRIRKSHKRPKDPQNKERASTKERTLKK) is disordered. Residues 470-483 (KDPQNKERASTKER) show a composition bias toward basic and acidic residues. Residues 486 to 491 (KKKKRK) carry the Nuclear localization signal motif. Residue Lys-500 forms a Glycyl lysine isopeptide (Lys-Gly) (interchain with G-Cter in SUMO2) linkage. Disordered regions lie at residues 502-526 (EELE…ESCP) and 660-679 (TASA…EQNG). Ser-521 bears the Phosphoserine mark. A nuclease region spans residues 658–813 (RGTASADVST…PSPHATAELF (156 aa)). The 81-residue stretch at 683 to 763 (SIVVDMREFR…RPVLLIEFDP (81 aa)) folds into the ERCC4 domain. Ser-764 carries the phosphoserine modification. The tract at residues 837-905 (TLPESEKYNP…QLYDFIHTSF (69 aa)) is hhH2, dimerization with ERCC1. At Lys-911 the chain carries N6-acetyllysine.

Belongs to the XPF family. Heterodimer composed of ERCC1 and ERCC4/XPF. Interacts with SLX4/BTBD12; this interaction is direct and links the ERCC1-ERCC4/XPF complex to SLX4, which may coordinate the action of the structure-specific endonuclease during DNA repair. It depends on Mg(2+) as a cofactor. In terms of processing, acetylation at Lys-911 by KAT5 promotes interaction with ERCC1 by disrupting a salt bridge between Glu-907 and Lys-911, thereby exposing a second binding site for ERCC1. Deacetylated by SIRT1.

It localises to the nucleus. The protein resides in the chromosome. Its function is as follows. Catalytic component of a structure-specific DNA repair endonuclease responsible for the 5-prime incision during DNA repair, and which is essential for nucleotide excision repair (NER) and interstrand cross-link (ICL) repair. The protein is DNA repair endonuclease XPF of Homo sapiens (Human).